The primary structure comprises 543 residues: Thiamine transport system permease protein ThiP (543 aa).

12 consecutive transmembrane segments (helical) span residues 19 to 39, 64 to 84, 102 to 122, 142 to 162, 205 to 225, 250 to 270, 300 to 320, 343 to 363, 379 to 399, 406 to 426, 468 to 488, and 510 to 530; these read VAGG…LLAL, FTIW…IPIA, LFAL…TSIY, DIYG…PLAV, GMIG…LTLG, AVAL…ILRL, IIVI…VVVS, LALG…LVAA, GASL…FILL, FVMA…PFAV, GMAF…IALF, and FDAA…MMIA. An ABC transmembrane type-1 1 domain is found at 62–266; that stretch reads ARFTIWQAVA…QLALTLLILL (205 aa). The ABC transmembrane type-1 2 domain occupies 339 to 530; that stretch reads IATSLALGFS…VLCLALMMIA (192 aa).

Belongs to the binding-protein-dependent transport system permease family. CysTW subfamily. In terms of assembly, the complex is composed of two ATP-binding proteins (ThiQ), two transmembrane proteins (ThiP) and a solute-binding protein (ThiB).

Its subcellular location is the cell inner membrane. In terms of biological role, part of the ABC transporter complex ThiBPQ involved in thiamine import. Probably responsible for the translocation of the substrate across the membrane. The protein is Thiamine transport system permease protein ThiP (thiP) of Brucella abortus (strain 2308).